A 64-amino-acid chain; its full sequence is Large ribosomal subunit protein bL35 (64 aa).

Positions 1 to 31 (MPKMKTHSGAKKRFKLTGTGKLKRQQANRRH) are disordered.

It belongs to the bacterial ribosomal protein bL35 family.

The polypeptide is Large ribosomal subunit protein bL35 (Paenarthrobacter aurescens (strain TC1)).